The chain runs to 615 residues: DNA mismatch repair protein MutL (615 aa).

Residues 369 to 397 (REPVAPRYTPAPASGSRPAAPWPNAQPGY) are disordered. Positions 378–391 (PAPASGSRPAAPWP) are enriched in low complexity.

The protein belongs to the DNA mismatch repair MutL/HexB family.

This protein is involved in the repair of mismatches in DNA. It is required for dam-dependent methyl-directed DNA mismatch repair. May act as a 'molecular matchmaker', a protein that promotes the formation of a stable complex between two or more DNA-binding proteins in an ATP-dependent manner without itself being part of a final effector complex. The sequence is that of DNA mismatch repair protein MutL from Escherichia coli (strain SMS-3-5 / SECEC).